The chain runs to 125 residues: Small ribosomal subunit protein uS13 (125 aa).

Belongs to the universal ribosomal protein uS13 family. In terms of assembly, part of the 30S ribosomal subunit. Forms a loose heterodimer with protein S19. Forms two bridges to the 50S subunit in the 70S ribosome.

Its function is as follows. Located at the top of the head of the 30S subunit, it contacts several helices of the 16S rRNA. In the 70S ribosome it contacts the 23S rRNA (bridge B1a) and protein L5 of the 50S subunit (bridge B1b), connecting the 2 subunits; these bridges are implicated in subunit movement. Contacts the tRNAs in the A and P-sites. The sequence is that of Small ribosomal subunit protein uS13 from Rickettsia typhi (strain ATCC VR-144 / Wilmington).